We begin with the raw amino-acid sequence, 424 residues long: Piriformospora indica-insensitive protein 2 (424 aa).

The first 21 residues, 1–21, serve as a signal peptide directing secretion; that stretch reads MLWQTFFSSLLLLSLLFGCNG. LRR repeat units follow at residues 141–166, 167–190, 191–213, 214–237, 238–263, 265–286, 287–311, 312–336, 337–360, and 362–387; these read ASNLESLEFRSNPGLIGELPETIGNL, TKLKSLVVLENGFSGELPASICNL, KRLKRLVFAGNSFAGMIPNCFKG, LKELLILDLSRNSFSGTLPTSFGD, LVSLLKLDLSNNLLEGNLPQELGFLK, LTLLDLRNNRFSGGLSKNIENI, QSLTELVLSNNPMGEEDMVGTNWGK, MSNLVVLDLSKMGLRGEIPTSLTNL, KRLRFLGLNNNNLTGFVPSKKLEA, and PCLGALYINGNNLTGELRFSTKFYEK.

It is found in the cell membrane. Its function is as follows. Required for growth promotion and enhanced seed production mediated by the endophytic fungus Piriformospora indica. This is Piriformospora indica-insensitive protein 2 (PII-2) from Arabidopsis thaliana (Mouse-ear cress).